We begin with the raw amino-acid sequence, 171 residues long: ATP synthase subunit b (171 aa).

The chain crosses the membrane as a helical span at residues 12–34 (FGLNLNLFETNVINLAVVIFGLY).

Belongs to the ATPase B chain family. F-type ATPases have 2 components, F(1) - the catalytic core - and F(0) - the membrane proton channel. F(1) has five subunits: alpha(3), beta(3), gamma(1), delta(1), epsilon(1). F(0) has four main subunits: a(1), b(1), b'(1) and c(10-14). The alpha and beta chains form an alternating ring which encloses part of the gamma chain. F(1) is attached to F(0) by a central stalk formed by the gamma and epsilon chains, while a peripheral stalk is formed by the delta, b and b' chains.

The protein resides in the cellular thylakoid membrane. Its function is as follows. F(1)F(0) ATP synthase produces ATP from ADP in the presence of a proton or sodium gradient. F-type ATPases consist of two structural domains, F(1) containing the extramembraneous catalytic core and F(0) containing the membrane proton channel, linked together by a central stalk and a peripheral stalk. During catalysis, ATP synthesis in the catalytic domain of F(1) is coupled via a rotary mechanism of the central stalk subunits to proton translocation. Component of the F(0) channel, it forms part of the peripheral stalk, linking F(1) to F(0). In Prochlorococcus marinus (strain MIT 9211), this protein is ATP synthase subunit b.